A 34-amino-acid chain; its full sequence is Conotoxin de13a (34 aa).

2 positions are modified to 4-hydroxyproline: Pro-3 and Pro-7. A 6'-bromotryptophan modification is found at Trp-14. Lys-18 carries the 5-hydroxylysine modification. A 4-hydroxyproline modification is found at Pro-21. Lys-25 is subject to 5-hydroxylysine. Position 32 is a histidine amide (His-32).

Contains 4 disulfide bonds. Post-translationally, the diastereomeric form of 5-hydroxylysine found was not conclusively established, but it is probably 5R. In terms of tissue distribution, expressed by the venom duct.

It localises to the secreted. The protein is Conotoxin de13a of Conasprella delessertii (Sozon's cone).